Reading from the N-terminus, the 149-residue chain is Large ribosomal subunit protein bL9 (149 aa).

This sequence belongs to the bacterial ribosomal protein bL9 family.

Its function is as follows. Binds to the 23S rRNA. The chain is Large ribosomal subunit protein bL9 from Synechococcus sp. (strain JA-2-3B'a(2-13)) (Cyanobacteria bacterium Yellowstone B-Prime).